The chain runs to 430 residues: Serine hydroxymethyltransferase (430 aa).

120–122 (GHI) serves as a coordination point for (6S)-5,6,7,8-tetrahydrofolate. K226 carries the post-translational modification N6-(pyridoxal phosphate)lysine.

This sequence belongs to the SHMT family. In terms of assembly, homodimer. Pyridoxal 5'-phosphate serves as cofactor.

The protein localises to the cytoplasm. It participates in amino-acid biosynthesis; glycine biosynthesis; glycine from L-serine: step 1/1. Functionally, catalyzes the reversible interconversion of serine and glycine with a modified folate serving as the one-carbon carrier. Also exhibits a pteridine-independent aldolase activity toward beta-hydroxyamino acids, producing glycine and aldehydes, via a retro-aldol mechanism. The sequence is that of Serine hydroxymethyltransferase from Pyrobaculum neutrophilum (strain DSM 2338 / JCM 9278 / NBRC 100436 / V24Sta) (Thermoproteus neutrophilus).